Reading from the N-terminus, the 1320-residue chain is Sister chromatid cohesion protein PDS5 homolog A (1320 aa).

HEAT repeat units lie at residues 156-195, 272-310, 388-426, 709-747, and 990-1028; these read NEIF…EGDG, PLLL…AKDS, NLVN…KYCL, PQIR…NKEV, and SLLP…CLWF. Over residues 1158–1179 the composition is skewed to polar residues; that stretch reads TFTSETGSNASTNSQPSSPATN. The segment at 1158 to 1320 is disordered; it reads TFTSETGSNA…APQRQIDLQR (163 aa). Positions 1180 to 1194 are enriched in basic and acidic residues; the sequence is KSRDVSSEVGARENE. The span at 1225–1241 shows a compositional bias: polar residues; the sequence is GTENSVSSNPSAGSQPP. The span at 1255–1267 shows a compositional bias: low complexity; it reads AGAATQEKEAGAT. Residues 1283–1293 are compositionally biased toward polar residues; sequence QDPSSTASTDA. The segment covering 1294–1309 has biased composition (basic and acidic residues); sequence LSDKTPKQQKEAEPKR.

This sequence belongs to the PDS5 family. In terms of assembly, interacts with the cohesin complex. Binds chromatin in a cohesin-dependent manner.

It is found in the nucleus. Its function is as follows. May regulate sister chromatid cohesion during mitosis and couple it to DNA replication. The polypeptide is Sister chromatid cohesion protein PDS5 homolog A (Danio rerio (Zebrafish)).